The following is a 213-amino-acid chain: Urease accessory protein UreG (213 aa).

GTP is bound at residue 14 to 21; the sequence is GPVGSGKT.

It belongs to the SIMIBI class G3E GTPase family. UreG subfamily. As to quaternary structure, homodimer. UreD, UreF and UreG form a complex that acts as a GTP-hydrolysis-dependent molecular chaperone, activating the urease apoprotein by helping to assemble the nickel containing metallocenter of UreC. The UreE protein probably delivers the nickel.

It is found in the cytoplasm. Facilitates the functional incorporation of the urease nickel metallocenter. This process requires GTP hydrolysis, probably effectuated by UreG. The protein is Urease accessory protein UreG of Mesorhizobium japonicum (strain LMG 29417 / CECT 9101 / MAFF 303099) (Mesorhizobium loti (strain MAFF 303099)).